The following is an 858-amino-acid chain: Protein 4.1 (858 aa).

The segment at 1 to 125 is disordered; that stretch reads MTTEKSLAAE…KEIELGNSLD (125 aa). Phosphoserine is present on Ser14. Positions 31-50 are enriched in low complexity; the sequence is QQETQLEEASQAAAAEGSDQ. Position 62 is a phosphothreonine (Thr62). Residues 63–77 are compositionally biased toward basic and acidic residues; that stretch reads PTHEDLTKNKERTSE. Low complexity predominate over residues 78–89; sequence SRGLSRLLSSFL. Phosphoserine is present on residues Ser86, Ser87, Ser97, Ser106, Ser123, Ser151, Ser153, and Ser154. The segment covering 103–119 has biased composition (basic and acidic residues); the sequence is EVESEKEKGEGGQKEIE. A disordered region spans residues 155 to 208; it reads IETQPAQEEHREDPDSETKEGEGIEECSGTEVKEDPESRAEREPEASQKPVRRH. 2 stretches are compositionally biased toward basic and acidic residues: residues 161–176 and 185–200; these read QEEH…KEGE and EVKE…EPEA. Phosphoserine is present on Ser192. In terms of domain architecture, FERM spans 211-492; the sequence is MHCKVSLLDD…EHHTFFRLTS (282 aa). Tyr223 bears the Phosphotyrosine mark. Residue Thr379 is modified to Phosphothreonine. Residues 495-608 form a hydrophilic region; that stretch reads TIPKSKFLAL…PAEPEPTEAW (114 aa). The disordered stretch occupies residues 518–636; sequence TRQASALIDR…TQKLAGKGED (119 aa). Ser522, Ser541, Ser543, and Ser556 each carry phosphoserine. Basic and acidic residues-rich tracts occupy residues 581–595 and 606–615; these read TPKE…RGEE and EAWKVEKTHT. The tract at residues 609-707 is spectrin--actin-binding; the sequence is KVEKTHTEVT…WDKRLSTHSP (99 aa). Over residues 616–629 the composition is skewed to polar residues; sequence EVTVPTSNGDQTQK. Residue Tyr654 is modified to Phosphotyrosine. A phosphoserine mark is found at Ser658, Ser668, Ser678, Ser703, and Ser706. The C-terminal (CTD) stretch occupies residues 710-858; sequence TLNINGQVPT…VHQETEISEE (149 aa). Phosphothreonine is present on residues Thr730 and Thr853.

As to quaternary structure, binds with a high affinity to glycophorin and with lower affinity to band III protein. Associates with the nuclear mitotic apparatus. Binds calmodulin, CPAP and DLG1. Also found to associate with contractile apparatus and tight junctions. Interacts with NUMA1; this interaction is negatively regulated by CDK1 during metaphase and promotes anaphase-specific localization of NUMA1 in symmetrically dividing cells. Interacts with ATP2B1; regulates small intestinal calcium absorption through regulation of membrane expression of ATP2B1. In terms of processing, O-glycosylated; contains N-acetylglucosamine side chains in the C-terminal domain. Phosphorylated at multiple sites by different protein kinases and each phosphorylation event selectively modulates the protein's functions. Post-translationally, phosphorylation on Tyr-654 reduces the ability of 4.1 to promote the assembly of the spectrin/actin/4.1 ternary complex.

Its subcellular location is the nucleus. It localises to the cytoplasm. The protein resides in the cytoskeleton. It is found in the cell cortex. Its function is as follows. Protein 4.1 is a major structural element of the erythrocyte membrane skeleton. It plays a key role in regulating membrane physical properties of mechanical stability and deformability by stabilizing spectrin-actin interaction. Recruits DLG1 to membranes. Required for dynein-dynactin complex and NUMA1 recruitment at the mitotic cell cortex during anaphase. This Mus musculus (Mouse) protein is Protein 4.1.